A 955-amino-acid polypeptide reads, in one-letter code: Anoctamin-4 (955 aa).

At 1-352 (MEASSSGITN…FGEKIGLYFA (352 aa)) the chain is on the cytoplasmic side. The disordered stretch occupies residues 73 to 97 (KDDDSLLHPGNLTSTSEDTSRLEAG). Residues 353-373 (WLGWYTGMLFPAAFIGLFVFL) form a helical membrane-spanning segment. Residues 374–424 (YGVTTLDHCQVSKEVCQATDIIMCPVCDKYCPFMRLSDSCVYAKVTHLFDN) lie on the Extracellular side of the membrane. Residues 425-445 (GATVFFAVFMAVWATVFLEFW) form a helical membrane-spanning segment. Residues 446 to 505 (KRRRAVIAYDWDLIDWEEEEEEIRPQFEAKYSKKERMNPISGKPEPYQAFTDKCSRLIVS) are Cytoplasmic-facing. Residues 506 to 526 (ASGIFFMICVVIAAVFGIVIY) traverse the membrane as a helical segment. The Extracellular portion of the chain corresponds to 527-547 (RVVTVSTFAAFKWALIRNNSQ). Asn544 is a glycosylation site (N-linked (GlcNAc...) asparagine). A helical membrane pass occupies residues 548–568 (VATTGTAVCINFCIIMLLNVL). Residues 569–595 (YEKVALLLTNLEQPRTESEWENSFTLK) are Cytoplasmic-facing. The helical transmembrane segment at 596-616 (MFLFQFVNLNSSTFYIAFFLG) threads the bilayer. At 617 to 715 (RFTGHPGAYL…AYGLFDEYLE (99 aa)) the chain is on the extracellular side. A helical membrane pass occupies residues 716 to 736 (MILQFGFTTIFVAAFPLAPLL). The Cytoplasmic portion of the chain corresponds to 737 to 768 (ALLNNIIEIRLDAYKFVTQWRRPLASRAKDIG). Residues 769-789 (IWYGILEGIGILSVITNAFVI) form a helical membrane-spanning segment. The Extracellular portion of the chain corresponds to 790 to 885 (AITSDFIPRL…QFWHVLAARL (96 aa)). 2 N-linked (GlcNAc...) asparagine glycosylation sites follow: Asn824 and Asn837. Residues 886 to 906 (AFIIVFEHLVFCIKHLISYLI) traverse the membrane as a helical segment. Residues 907–955 (PDLPKDLRDRMRREKYLIQEMMYEAELERLQKERKERKKNGKAHHNEWP) lie on the Cytoplasmic side of the membrane.

This sequence belongs to the anoctamin family. Predominantly expressed in neuronal tissues. Expressed at low levels in ovary, uterus, heart and brain.

The protein localises to the cell membrane. It carries out the reaction a 1,2-diacyl-sn-glycero-3-phospho-L-serine(in) = a 1,2-diacyl-sn-glycero-3-phospho-L-serine(out). The enzyme catalyses a beta-D-galactosyl-(1&lt;-&gt;1')-N-acylsphing-4-enine(out) = a beta-D-galactosyl-(1&lt;-&gt;1')-N-acylsphing-4-enine(in). It catalyses the reaction a 1,2-diacyl-sn-glycero-3-phosphocholine(in) = a 1,2-diacyl-sn-glycero-3-phosphocholine(out). Its function is as follows. Has calcium-dependent phospholipid scramblase activity; scrambles phosphatidylserine, phosphatidylcholine and galactosylceramide. Does not exhibit calcium-activated chloride channel (CaCC) activity. The chain is Anoctamin-4 from Mus musculus (Mouse).